Here is a 187-residue protein sequence, read N- to C-terminus: dCTP deaminase, dUMP-forming (187 aa).

DCTP is bound by residues 101–106 (KSSLGR) and aspartate 119. Glutamate 129 (proton donor/acceptor) is an active-site residue. DCTP-binding residues include glutamine 148, tyrosine 162, and glutamine 174.

Belongs to the dCTP deaminase family. In terms of assembly, homotrimer.

It carries out the reaction dCTP + 2 H2O = dUMP + NH4(+) + diphosphate. It participates in pyrimidine metabolism; dUMP biosynthesis; dUMP from dCTP: step 1/1. Bifunctional enzyme that catalyzes both the deamination of dCTP to dUTP and the hydrolysis of dUTP to dUMP without releasing the toxic dUTP intermediate. The sequence is that of dCTP deaminase, dUMP-forming from Corynebacterium kroppenstedtii (strain DSM 44385 / JCM 11950 / CIP 105744 / CCUG 35717).